A 496-amino-acid polypeptide reads, in one-letter code: Probable cytosol aminopeptidase (496 aa).

Mn(2+) contacts are provided by Lys258 and Asp263. Lys270 is an active-site residue. Mn(2+) is bound by residues Asp281, Asp340, and Glu342. The active site involves Arg344.

Belongs to the peptidase M17 family. Requires Mn(2+) as cofactor.

Its subcellular location is the cytoplasm. It carries out the reaction Release of an N-terminal amino acid, Xaa-|-Yaa-, in which Xaa is preferably Leu, but may be other amino acids including Pro although not Arg or Lys, and Yaa may be Pro. Amino acid amides and methyl esters are also readily hydrolyzed, but rates on arylamides are exceedingly low.. The catalysed reaction is Release of an N-terminal amino acid, preferentially leucine, but not glutamic or aspartic acids.. Its function is as follows. Presumably involved in the processing and regular turnover of intracellular proteins. Catalyzes the removal of unsubstituted N-terminal amino acids from various peptides. The polypeptide is Probable cytosol aminopeptidase (Helicobacter pylori (strain Shi470)).